The sequence spans 174 residues: RNA pyrophosphohydrolase (174 aa).

The region spanning 6 to 149 is the Nudix hydrolase domain; the sequence is GFRANVGIII…KRDVYRKVMK (144 aa). A Nudix box motif is present at residues 38–59; sequence GGVDDGESAEEAMYRELYEEVG.

Belongs to the Nudix hydrolase family. RppH subfamily. A divalent metal cation is required as a cofactor.

In terms of biological role, accelerates the degradation of transcripts by removing pyrophosphate from the 5'-end of triphosphorylated RNA, leading to a more labile monophosphorylated state that can stimulate subsequent ribonuclease cleavage. The polypeptide is RNA pyrophosphohydrolase (Shewanella sp. (strain W3-18-1)).